We begin with the raw amino-acid sequence, 148 residues long: MTMAARLMLVAALLCAAAAAATAQQATNVRATYHYYRPAQNNWDLGAPAVSAYCATWDASKPLSWRSKYGWTAFCGPAGAHGQAACGKCLRVTNPATGAQITARIVDQCANGGLDLDWDTVFTKIDTNGIGYQQGHLNVNYQFVDCRD.

A signal peptide spans methionine 1–alanine 23. Position 24 is a pyrrolidone carboxylic acid (glutamine 24). A Barwin domain is found at glutamine 24–aspartate 148. Disulfide bonds link cysteine 54-cysteine 86, cysteine 75-cysteine 109, and cysteine 89-cysteine 146.

As to quaternary structure, monomer.

Functionally, shows antifungal activity towards B.cinerea and towards the wheat-specific pathogenic fungi F.culmorum and F.graminearum (groups 1 and 2). This is Wheatwin-2 (PR4B) from Triticum aestivum (Wheat).